A 119-amino-acid chain; its full sequence is Large ribosomal subunit protein uL18 (119 aa).

This sequence belongs to the universal ribosomal protein uL18 family. As to quaternary structure, part of the 50S ribosomal subunit; part of the 5S rRNA/L5/L18/L25 subcomplex. Contacts the 5S and 23S rRNAs.

Functionally, this is one of the proteins that bind and probably mediate the attachment of the 5S RNA into the large ribosomal subunit, where it forms part of the central protuberance. The sequence is that of Large ribosomal subunit protein uL18 from Clostridium kluyveri (strain ATCC 8527 / DSM 555 / NBRC 12016 / NCIMB 10680 / K1).